The primary structure comprises 255 residues: Type III pantothenate kinase (255 aa).

6–13 serves as a coordination point for ATP; that stretch reads DVGNTNIV. Substrate contacts are provided by residues Y100 and 107–110; that span reads GADR. The active-site Proton acceptor is the D109. D129 serves as a coordination point for K(+). T132 is an ATP binding site. T184 is a binding site for substrate.

It belongs to the type III pantothenate kinase family. In terms of assembly, homodimer. Requires NH4(+) as cofactor. K(+) serves as cofactor.

Its subcellular location is the cytoplasm. It catalyses the reaction (R)-pantothenate + ATP = (R)-4'-phosphopantothenate + ADP + H(+). It functions in the pathway cofactor biosynthesis; coenzyme A biosynthesis; CoA from (R)-pantothenate: step 1/5. Functionally, catalyzes the phosphorylation of pantothenate (Pan), the first step in CoA biosynthesis. The chain is Type III pantothenate kinase from Caldanaerobacter subterraneus subsp. tengcongensis (strain DSM 15242 / JCM 11007 / NBRC 100824 / MB4) (Thermoanaerobacter tengcongensis).